The chain runs to 160 residues: MAGESTNSVGNDITSLIQPGLDQVIQDEGVQVTLINSILGWCRIHIINPVKSSKIVKSRAFQITMIVLGIILLIAGLALTFVLQGQLGNNAFLFLIPAVIGLVKLLATSVFMEKPCTPEKWRLCKRLLATTEDILDDGQINQSNTIFTMDSSESTNAAAS.

The next 2 membrane-spanning stretches (helical) occupy residues 63-83 and 92-112; these read ITMI…TFVL and FLFL…SVFM.

It is found in the membrane. This is Sulfur-rich protein (srp) from Chlamydia abortus (strain DSM 27085 / S26/3) (Chlamydophila abortus).